Here is a 209-residue protein sequence, read N- to C-terminus: Flavin prenyltransferase UbiX (209 aa).

Residues 13-15, S39, 104-107, C116, and R139 each bind FMN; these read GAS and STGT. Positions 169 and 185 each coordinate dimethylallyl phosphate.

Belongs to the UbiX/PAD1 family.

The catalysed reaction is dimethylallyl phosphate + FMNH2 = prenylated FMNH2 + phosphate. In terms of biological role, flavin prenyltransferase that catalyzes the synthesis of the prenylated FMN cofactor (prenyl-FMN) for 4-hydroxy-3-polyprenylbenzoic acid decarboxylase UbiD. The prenyltransferase is metal-independent and links a dimethylallyl moiety from dimethylallyl monophosphate (DMAP) to the flavin N5 and C6 atoms of FMN. This chain is Flavin prenyltransferase UbiX, found in Pseudomonas aeruginosa (strain ATCC 15692 / DSM 22644 / CIP 104116 / JCM 14847 / LMG 12228 / 1C / PRS 101 / PAO1).